We begin with the raw amino-acid sequence, 207 residues long: Glycerol-3-phosphate acyltransferase (207 aa).

5 helical membrane-spanning segments follow: residues 3-23, 54-74, 81-101, 122-142, and 158-178; these read LIGLLIVAYLLGAIPNGVWVG, TIVMVLDIAKGSVATLLPIVF, GTATPLLFGLFAVLGHTVSIF, PIMFVIAAGFWVSLIYWTSIV, and LVFQDWYLTGIALVLTVFVFY.

This sequence belongs to the PlsY family. Probably interacts with PlsX.

The protein localises to the cell membrane. The enzyme catalyses an acyl phosphate + sn-glycerol 3-phosphate = a 1-acyl-sn-glycero-3-phosphate + phosphate. The protein operates within lipid metabolism; phospholipid metabolism. Its function is as follows. Catalyzes the transfer of an acyl group from acyl-phosphate (acyl-PO(4)) to glycerol-3-phosphate (G3P) to form lysophosphatidic acid (LPA). This enzyme utilizes acyl-phosphate as fatty acyl donor, but not acyl-CoA or acyl-ACP. The protein is Glycerol-3-phosphate acyltransferase of Levilactobacillus brevis (strain ATCC 367 / BCRC 12310 / CIP 105137 / JCM 1170 / LMG 11437 / NCIMB 947 / NCTC 947) (Lactobacillus brevis).